Reading from the N-terminus, the 302-residue chain is Ornithine carbamoyltransferase (302 aa).

Carbamoyl phosphate is bound by residues 53 to 56, Gln80, Arg104, and 131 to 134; these read STRT and HPCQ. L-ornithine contacts are provided by residues Asn162, Asp219, and 223–224; that span reads SM. Residues 259–260 and Arg287 contribute to the carbamoyl phosphate site; that span reads CL.

This sequence belongs to the aspartate/ornithine carbamoyltransferase superfamily. OTCase family.

It localises to the cytoplasm. The enzyme catalyses carbamoyl phosphate + L-ornithine = L-citrulline + phosphate + H(+). The protein operates within amino-acid biosynthesis; L-arginine biosynthesis; L-arginine from L-ornithine and carbamoyl phosphate: step 1/3. In terms of biological role, reversibly catalyzes the transfer of the carbamoyl group from carbamoyl phosphate (CP) to the N(epsilon) atom of ornithine (ORN) to produce L-citrulline. The protein is Ornithine carbamoyltransferase of Hydrogenovibrio crunogenus (strain DSM 25203 / XCL-2) (Thiomicrospira crunogena).